A 287-amino-acid chain; its full sequence is tRNA selenocysteine 1-associated protein 1 (287 aa).

2 consecutive RRM domains span residues 3–86 (ASLW…YATY) and 96–175 (YSLF…VAIP).

The protein belongs to the RRM TRSPAP family. Component of the tRNA(Sec) complex composed at least of EEFSEC, SECISBP2, SEPHS1, SEPSECS, TRNAU1AP and tRNA(Sec). Found in a complex with tRNA(Sec). Interacts with SEPSECS. Associates with mRNP and/or polysomes. Found in a complex with EEFSEC, SECISBP2, TRNAU1AP and tRNA(Sec).

It localises to the nucleus. The protein localises to the cytoplasm. Its function is as follows. Involved in the early steps of selenocysteine biosynthesis and tRNA(Sec) charging to the later steps resulting in the cotranslational incorporation of selenocysteine into selenoproteins. Stabilizes the SECISBP2, EEFSEC and tRNA(Sec) complex. May be involved in the methylation of tRNA(Sec). Enhances efficiency of selenoproteins synthesis. The sequence is that of tRNA selenocysteine 1-associated protein 1 (TRNAU1AP) from Bos taurus (Bovine).